Consider the following 271-residue polypeptide: Tryptophan synthase alpha chain (271 aa).

Residues E49 and D60 each act as proton acceptor in the active site.

The protein belongs to the TrpA family. As to quaternary structure, tetramer of two alpha and two beta chains.

It carries out the reaction (1S,2R)-1-C-(indol-3-yl)glycerol 3-phosphate + L-serine = D-glyceraldehyde 3-phosphate + L-tryptophan + H2O. It functions in the pathway amino-acid biosynthesis; L-tryptophan biosynthesis; L-tryptophan from chorismate: step 5/5. Its function is as follows. The alpha subunit is responsible for the aldol cleavage of indoleglycerol phosphate to indole and glyceraldehyde 3-phosphate. The polypeptide is Tryptophan synthase alpha chain (Leptothrix cholodnii (strain ATCC 51168 / LMG 8142 / SP-6) (Leptothrix discophora (strain SP-6))).